A 584-amino-acid chain; its full sequence is Peroxynitrite isomerase THAP4 (584 aa).

The segment at 1-85 (MVICCAAANC…LKPTAVPSIF (85 aa)) adopts a THAP-type zinc-finger fold. Positions 84–330 (IFHLAEKKRR…EAVQSEHSDA (247 aa)) are disordered. The segment covering 89–104 (EKKRRAGGHGRPRRRD) has biased composition (basic residues). Residues 122 to 138 (GKAAAGSPSSSSASPMA) are compositionally biased toward low complexity. The span at 158–178 (AARETAGQERGRQPLEGRAED) shows a compositional bias: basic and acidic residues. A compositionally biased stretch (low complexity) spans 190–208 (GEAGTGAEDAGEEGATPAD). The HCFC1-binding motif (HBM) signature appears at 236–239 (LHSY). A Phosphoserine modification is found at S240. The segment covering 248–267 (ERPAVPREPVERKRLRRDAE) has biased composition (basic and acidic residues). Residues 422 to 584 (PPKMSPVVEP…LHVTYKKVTP (163 aa)) form a nitrobindin region. Residues T451 and H574 each coordinate heme b.

The protein in the C-terminal section; belongs to the nitrobindin family. As to quaternary structure, homodimer. The cofactor is heme b.

It localises to the cytoplasm. It is found in the nucleus. It carries out the reaction peroxynitrite = nitrate. The protein operates within nitrogen metabolism. In terms of biological role, heme-binding protein able to scavenge peroxynitrite and to protect free L-tyrosine against peroxynitrite-mediated nitration, by acting as a peroxynitrite isomerase that converts peroxynitrite to nitrate. Therefore, this protein likely plays a role in peroxynitrite sensing and in the detoxification of reactive nitrogen and oxygen species (RNS and ROS, respectively). Is able to bind nitric oxide (NO) in vitro, but may act as a sensor of peroxynitrite levels in vivo, possibly modulating the transcriptional activity residing in the N-terminal region. This Bos taurus (Bovine) protein is Peroxynitrite isomerase THAP4.